Reading from the N-terminus, the 90-residue chain is UPF0335 protein RPA4190 (90 aa).

Belongs to the UPF0335 family.

The polypeptide is UPF0335 protein RPA4190 (Rhodopseudomonas palustris (strain ATCC BAA-98 / CGA009)).